A 761-amino-acid chain; its full sequence is 5-methyltetrahydropteroyltriglutamate--homocysteine methyltransferase (761 aa).

Residues 16-19 (RELK) and Lys-116 each bind 5-methyltetrahydropteroyltri-L-glutamate. L-homocysteine is bound by residues 437-439 (IGS) and Glu-490. L-methionine-binding positions include 437-439 (IGS) and Glu-490. Residues 521–522 (RC) and Trp-567 each bind 5-methyltetrahydropteroyltri-L-glutamate. Asp-605 serves as a coordination point for L-homocysteine. An L-methionine-binding site is contributed by Asp-605. Glu-611 contributes to the 5-methyltetrahydropteroyltri-L-glutamate binding site. Residues His-647, Cys-649, and Glu-671 each contribute to the Zn(2+) site. The active-site Proton donor is the His-700. Residue Cys-732 participates in Zn(2+) binding.

Belongs to the vitamin-B12 independent methionine synthase family. It depends on Zn(2+) as a cofactor.

The enzyme catalyses 5-methyltetrahydropteroyltri-L-glutamate + L-homocysteine = tetrahydropteroyltri-L-glutamate + L-methionine. The protein operates within amino-acid biosynthesis; L-methionine biosynthesis via de novo pathway; L-methionine from L-homocysteine (MetE route): step 1/1. Catalyzes the transfer of a methyl group from 5-methyltetrahydrofolate to homocysteine resulting in methionine formation. The protein is 5-methyltetrahydropteroyltriglutamate--homocysteine methyltransferase of Chromohalobacter salexigens (strain ATCC BAA-138 / DSM 3043 / CIP 106854 / NCIMB 13768 / 1H11).